The following is a 1675-amino-acid chain: Clathrin heavy chain 1 (1675 aa).

A2 bears the N-acetylalanine mark. The interval 2–479 is globular terminal domain; the sequence is AQILPIRFQE…VDPTLALSVY (478 aa). WD40-like repeat regions lie at residues 24–67, 68–107, 108–149, 150–195, 196–257, 258–301, and 302–330; these read NIGF…RPIS, ADSA…MTDD, VTFW…SSLA, GCQI…QPIE, GHAA…PEAQ, NDFP…ISGE, and TIFV…VCVE. S67 is modified (phosphoserine). The residue at position 105 (T105) is a Phosphothreonine. Y184 is subject to Phosphotyrosine. Phosphothreonine is present on T394. Residues 449–465 are binding site for the uncoating ATPase, involved in lattice disassembly; the sequence is EKWLKEDKLECSEELGD. The segment at 480–523 is flexible linker; that stretch reads LRANVPNKVIQCFAETGQVQKIVLYAKKVGYTPDWIFLLRNVMR. Residues 524 to 634 form a distal segment region; that stretch reads ISPDQGQQFA…RALEHFTDLY (111 aa). The interval 524-1675 is heavy chain arm; sequence ISPDQGQQFA…QPQPGFGYSM (1152 aa). CHCR repeat units lie at residues 537 to 683, 686 to 828, 833 to 972, 979 to 1124, 1128 to 1269, 1274 to 1420, and 1423 to 1566; these read VQDE…QICV, ASKY…SEDV, ILVV…PLID, LSET…VKEA, YIKA…FRLA, LHIV…LLLN, and LMVL…RECF. Residue Y634 is modified to Phosphotyrosine. The proximal segment stretch occupies residues 639–1675; the sequence is AVVHTHLLNP…QPQPGFGYSM (1037 aa). Residue K737 is modified to N6-succinyllysine. K856 bears the N6-acetyllysine mark. Y899 carries the phosphotyrosine modification. S1167 carries the phosphoserine modification. Y1206 carries the post-translational modification Phosphotyrosine. Residues 1213–1522 are involved in binding clathrin light chain; it reads AAKLLYNNVS…YLFKGNNRWK (310 aa). S1229 is subject to Phosphoserine. Position 1441 is an N6-acetyllysine; alternate (K1441). K1441 bears the N6-succinyllysine; alternate mark. Phosphotyrosine occurs at positions 1477 and 1487. At S1494 the chain carries Phosphoserine. N6-acetyllysine is present on K1501. Positions 1550–1675 are trimerization; sequence AEELLQWFLQ…QPQPGFGYSM (126 aa).

This sequence belongs to the clathrin heavy chain family. As to quaternary structure, clathrin triskelions, composed of 3 heavy chains and 3 light chains, are the basic subunits of the clathrin coat. In the presence of light chains, hub assembly is influenced by both the pH and the concentration of calcium. Interacts with HIP1. Interacts with DENND1A, DENND1B and DENND1C. Interacts with ERBB2. Interacts with FKBP6. Interacts with OCRL. Interacts with CKAP5 and TACC3 forming the TACC3/ch-TOG/clathrin complex located at spindle inter-microtubules bridges; the complex implicates clathrin triskelions; TACC3 and CLTC are proposed to form a composite microtubule interaction surface. Plays a role in early autophagosome formation. Interacts with ATG16L1 (via N-terminus). Interacts with RFTN1; the interaction occurs in response to pathogens. Interacts with USP2 isoform 2. Interacts with TMEM106B (via N-terminus). Interacts with DNAJC6; this interaction produces a local change in heavy-chain contacts, creating a detectable global distortion of the clathrin coat and leads to the recruitment of HSPA8.

The protein resides in the cytoplasmic vesicle membrane. The protein localises to the membrane. It localises to the coated pit. Its subcellular location is the melanosome. It is found in the cytoplasm. The protein resides in the cytoskeleton. The protein localises to the spindle. Clathrin is the major protein of the polyhedral coat of coated pits and vesicles. Two different adapter protein complexes link the clathrin lattice either to the plasma membrane or to the trans-Golgi network. Acts as a component of the TACC3/ch-TOG/clathrin complex proposed to contribute to stabilization of kinetochore fibers of the mitotic spindle by acting as inter-microtubule bridge. The TACC3/ch-TOG/clathrin complex is required for the maintenance of kinetochore fiber tension. Plays a role in early autophagosome formation. Interaction with DNAJC6 mediates the recruitment of HSPA8 to the clathrin lattice and creates local destabilization of the lattice promoting uncoating. In Mus musculus (Mouse), this protein is Clathrin heavy chain 1.